We begin with the raw amino-acid sequence, 297 residues long: Transmembrane protein 178A (297 aa).

Positions 1–25 are cleaved as a signal peptide; that stretch reads MEPRALVTALSLGLSLCSLGLLVTA. Residues 26–179 are Extracellular-facing; the sequence is IFTDHWYETD…LLHLRRITAG (154 aa). Over residues 41-57 the composition is skewed to basic and acidic residues; it reads ESCERSRAGADPPDQKN. The interval 41-86 is disordered; the sequence is ESCERSRAGADPPDQKNRLMPLSHLPLRDSPPLGRRLLPGGPGRSD. Positions 68 to 79 are enriched in low complexity; that stretch reads RDSPPLGRRLLP. Asn-158 carries an N-linked (GlcNAc...) asparagine glycan. The helical transmembrane segment at 180 to 200 threads the bilayer; the sequence is FLGMAVAVLLCGCIVATVSFF. Topologically, residues 201–208 are cytoplasmic; it reads WEESLTQH. The chain crosses the membrane as a helical span at residues 209–229; the sequence is VAGLLFLMTGIFCTISLCTYA. At 230–257 the chain is on the extracellular side; it reads ASVSYDLNRVPKLIYSLPHDVEHGYSWS. A helical membrane pass occupies residues 258-278; that stretch reads IFCAWCSLGFIVAAGGLCIAY. Residues 279–297 lie on the Cytoplasmic side of the membrane; the sequence is PFISRTKIAHLKSGRDSTV.

Belongs to the TMEM178 family. As to quaternary structure, interacts with STIM1.

It is found in the endoplasmic reticulum membrane. Its function is as follows. Acts as a negative regulator of osteoclast differentiation in basal and inflammatory conditions by regulating TNFSF11-induced Ca (2+) fluxes, thereby controlling the induction of NFATC1. This is Transmembrane protein 178A (Tmem178a) from Rattus norvegicus (Rat).